Consider the following 296-residue polypeptide: NAD kinase (296 aa).

The Proton acceptor role is filled by aspartate 72. Residues 72-73 (DG), 146-147 (ND), arginine 157, arginine 174, aspartate 176, 187-192 (TAYALS), and glutamine 247 each bind NAD(+).

The protein belongs to the NAD kinase family. Requires a divalent metal cation as cofactor.

The protein resides in the cytoplasm. It catalyses the reaction NAD(+) + ATP = ADP + NADP(+) + H(+). Its function is as follows. Involved in the regulation of the intracellular balance of NAD and NADP, and is a key enzyme in the biosynthesis of NADP. Catalyzes specifically the phosphorylation on 2'-hydroxyl of the adenosine moiety of NAD to yield NADP. In Hahella chejuensis (strain KCTC 2396), this protein is NAD kinase.